The primary structure comprises 1003 residues: Glycine--tRNA ligase (1003 aa).

The interval 1–310 (MSSQPLTLQA…VTPKKIPTIC (310 aa)) is glycine--tRNA ligase alpha subunit. A glycine--tRNA ligase beta subunit region spans residues 311–1003 (QPEDFLLEIG…CFGFYAWDVL (693 aa)).

This sequence belongs to the class-II aminoacyl-tRNA synthetase family.

The protein localises to the cytoplasm. It catalyses the reaction tRNA(Gly) + glycine + ATP = glycyl-tRNA(Gly) + AMP + diphosphate. The protein is Glycine--tRNA ligase (glyQS) of Chlamydia trachomatis serovar L2 (strain ATCC VR-902B / DSM 19102 / 434/Bu).